Here is a 558-residue protein sequence, read N- to C-terminus: REST corepressor spr-1 (558 aa).

Residues 1–106 (MDLYDDDGES…KVKGPLSNTN (106 aa)) are disordered. The span at 36-56 (TIEENVPEVEENTLLEEDSLV) shows a compositional bias: acidic residues. The segment covering 69-80 (KPSKSKRKRKRS) has biased composition (basic residues). The ELM2 domain occupies 107–192 (KEINVGTEFQ…SAIAEVARRN (86 aa)). The SANT 1 domain occupies 193–244 (ELKDVWTDQEITLFENCYQIFGKNFSQIRSALCHRSLQSIVQFYYESKKRVK). A GATA-type zinc finger spans residues 271-325 (AIFESMCDNCGEKAENMQINNAMNRPECRACLIYFNQTGVPRPTSLRLVLAERIR). A compositionally biased stretch (polar residues) spans 378–402 (CTENGNVGETSSPSAQKTEIQSESD). Residues 378–406 (CTENGNVGETSSPSAQKTEIQSESDGSGP) are disordered. One can recognise an SANT 2 domain in the interval 481-532 (HYSQDWTQLERSQVIRCFNMYGAHFEHIADVIGTKTPDQVYQFYLENQKAID).

It belongs to the CoREST family. As to quaternary structure, probably part of a large repressor complex. Interacts with histone demethylase spr-5/lsd-1.

Its subcellular location is the nucleus. In terms of biological role, probable corepressor protein, which probably participates in the transcriptional repression of the presenilin protein hop-1. Probably acts via the formation of a multiprotein complex that deacetylates and demethylates specific sites on histones. Acts redundantly with the transcriptional repressor lin-35 to play a role in vulval morphogenesis and promote germline proliferation. This is REST corepressor spr-1 from Caenorhabditis elegans.